Here is a 444-residue protein sequence, read N- to C-terminus: MTLDLSKPATAGYLSGFANEFATEALPGALPHGRNSPQRAPYGLYAEQLSGTAFTAPRGHNRRSWLYRIRPAAVHRPFEPYAGAQRLVSEFGDSADVPPTPPNQLRWDPLPMLVEPTDFVDGLVTMAGNGSAAAMNGCAIHLYAANRSMQDRFFYSADGELLIVPQQGRLFIATEFGRLDVEPFEIAVIPRGVRFAVALPDGDARGYICENFGALLRLPDLGPIGSNGLANPRDFLTPQAAYEDREGAFELIAKLNGRLWRADIGHSPLDVVAWHGNYAPYKYDLRLFNTIGSISFDHPDPSIFLVLQAQSDTPGVDTIDFVIFPPRWLAAEDTFRPPWFHRNVASEFMGLVHGAYDAKAEGFVPGGASLHNCMSGHGPDADTFEKASASDTTKPHKVDATMAFMFETRTLIRPTCYALDTAQLQADYFECWQGIKKHFNPEQK.

His298 serves as the catalytic Proton acceptor. Residues His341 and Glu347 each contribute to the Fe cation site. Homogentisate-binding residues include Tyr356 and His377. His377 provides a ligand contact to Fe cation.

The protein belongs to the homogentisate dioxygenase family. As to quaternary structure, hexamer; dimer of trimers. It depends on Fe cation as a cofactor.

The enzyme catalyses homogentisate + O2 = 4-maleylacetoacetate + H(+). It participates in amino-acid degradation; L-phenylalanine degradation; acetoacetate and fumarate from L-phenylalanine: step 4/6. Involved in the catabolism of homogentisate (2,5-dihydroxyphenylacetate or 2,5-OH-PhAc), a central intermediate in the degradation of phenylalanine and tyrosine. Catalyzes the oxidative ring cleavage of the aromatic ring of homogentisate to yield maleylacetoacetate. This chain is Homogentisate 1,2-dioxygenase, found in Burkholderia orbicola (strain MC0-3).